Here is a 360-residue protein sequence, read N- to C-terminus: GTPase Obg (360 aa).

Positions 1-156 (MFVDSVEIII…KCVRLELKLI (156 aa)) constitute an Obg domain. Residues 157 to 360 (ADIGLVGFPN…LKFVLLKALP (204 aa)) enclose the OBG-type G domain. Residues 163-170 (GFPNAGKS), 188-192 (FTTLV), 210-213 (DIPG), 279-282 (NKCD), and 341-343 (SAV) each bind GTP. Residues Ser-170 and Thr-190 each contribute to the Mg(2+) site.

Belongs to the TRAFAC class OBG-HflX-like GTPase superfamily. OBG GTPase family. As to quaternary structure, monomer. The cofactor is Mg(2+).

The protein resides in the cytoplasm. Its function is as follows. An essential GTPase which binds GTP, GDP and possibly (p)ppGpp with moderate affinity, with high nucleotide exchange rates and a fairly low GTP hydrolysis rate. Plays a role in control of the cell cycle, stress response, ribosome biogenesis and in those bacteria that undergo differentiation, in morphogenesis control. The protein is GTPase Obg of Helicobacter pylori (strain G27).